Consider the following 593-residue polypeptide: Aspartate--tRNA ligase (593 aa).

Residue Glu-181 participates in L-aspartate binding. An aspartate region spans residues 205 to 208; it reads QLYK. Arg-227 is a binding site for L-aspartate. ATP contacts are provided by residues 227–229 and Gln-236; that span reads RDE. Residue His-455 participates in L-aspartate binding. An ATP-binding site is contributed by Glu-489. Residue Arg-496 participates in L-aspartate binding. 541–544 lines the ATP pocket; the sequence is GLDR.

This sequence belongs to the class-II aminoacyl-tRNA synthetase family. Type 1 subfamily. In terms of assembly, homodimer.

The protein resides in the cytoplasm. The catalysed reaction is tRNA(Asp) + L-aspartate + ATP = L-aspartyl-tRNA(Asp) + AMP + diphosphate. Functionally, catalyzes the attachment of L-aspartate to tRNA(Asp) in a two-step reaction: L-aspartate is first activated by ATP to form Asp-AMP and then transferred to the acceptor end of tRNA(Asp). The chain is Aspartate--tRNA ligase from Ruminiclostridium cellulolyticum (strain ATCC 35319 / DSM 5812 / JCM 6584 / H10) (Clostridium cellulolyticum).